A 237-amino-acid polypeptide reads, in one-letter code: uncharacterized protein (237 aa).

A signal peptide spans 1-27 (MKSFLRKPKFWLLLLGGLSTSSIILSA). Residue C28 is the site of N-palmitoyl cysteine attachment. C28 is lipidated: S-diacylglycerol cysteine.

Belongs to the MG307/MG309/MG338 family.

Its subcellular location is the membrane. This is an uncharacterized protein from Mycoplasma pneumoniae (strain ATCC 29342 / M129 / Subtype 1) (Mycoplasmoides pneumoniae).